Consider the following 1091-residue polypeptide: Protein CTR9 homolog (1091 aa).

At alanine 2 the chain carries N-acetylalanine. TPR repeat units follow at residues 90-127 (GAYYSYLGKTETKNREKEEQFISATRYYNKASRIDMHE), 128-161 (PSTWVGKGQLLLAKGEIDNALQAFKIVLDTAPDN), 163-195 (PALLGQASVEFNRGRFSESLQLYKRALQVFPGC), 197-230 (AAVRLGIGLCRYKLGQLDKARQAFDRVLQLDPDN), 232-267 (EALVALGIMDLQANDSIGMRKGMDRMQQAFEIYPYC), 305-338 (SHSFYNLARSYHSKGDFEKAGMYYMAAIKETNNN), 343-376 (VFPYFGLGQVQLKLGELKGSVFNFEKVLEVYPDN), 377-410 (CETLKALGHLYTQLGQNEKALEYMRKATKLDPRD), 412-443 (QAFVGLGELLISSDTGAALDAFKMARTLMKKG), 449-482 (IEVLNDIGALHFEREEFESALENFKEALGDGIWI), 558-591 (IDAYLRLAASAKAQNNLPLAIELVNEALKVDDKN), 593-625 (NALSLLGELELKNDDWVKAKETFRAANDATDGK), 640-673 (AAMRNEKRNPKLEATHLEKAKELYTKVLTQHNSN), 674-707 (MYAANGSGIVLAEKGQFDIAKDVFTQVQEAASGS), 713-746 (PDVWVNLAHVYFAQGNFALTVKMYQNCLRKFFYN), and 749-782 (SQILLYLARTHYEAEQWQECKKTLLRAIHLTPSN). Residues 919–1091 (FQRIKEQWKS…EEEEEEEEAN (173 aa)) form a disordered region. Residues 951 to 965 (ERRRKKGGKRRKKDK) show a composition bias toward basic residues. 4 stretches are compositionally biased toward acidic residues: residues 974-993 (DDEEEAATMDDHNEVEDEDA), 1003-1016 (MTTQEAEEPVDDDA), 1026-1035 (EDPDVDDDEV), and 1080-1091 (NMEEEEEEEEAN).

Component of the nuclear PAF1 complex (PAF1C), which consists of VIP2/ELF7/PAF1, VIP3/SKI8/WDR61, VIP4/LEO1, VIP5/RTF1, VIP6/ELF8/CTR9 and CDC73. Interacts with VIP3 and VIP4. Expressed in roots, leaves and shoot apex.

The protein localises to the nucleus. In terms of biological role, component of the PAF1 complex (PAF1C) which is involved in histone modifications such as methylation on histone H3 'Lys-4' (H3K4me3). Involved in regulation of flowering time. Required for the expression of the MADS box genes and flowering repressors FLC, AGL27/FLM and AGL31/MAF2. Required for histone H3 trimethylation on 'Lys-4' H3K4me3 at the FLC and AGL27/FLM loci. Involved in the control of seed dormancy and germination. The protein is Protein CTR9 homolog of Arabidopsis thaliana (Mouse-ear cress).